A 140-amino-acid polypeptide reads, in one-letter code: MLKEFQEFISKGNVMDLAVGVIIGAAFGKIVTSLVDDVIMPIFGAIFGGLDFNNYYIGLSSAVNATSLAEAKKQGAVFAYGSFITAVLNFLILAFIIFLMVKAVNNLRRRLEREKPAAPAAPPPADVALLTEIRDLLAKR.

A run of 3 helical transmembrane segments spans residues 8-28 (FISK…AAFG), 30-50 (IVTS…FGGL), and 81-101 (GSFI…FLMV).

Belongs to the MscL family. In terms of assembly, homopentamer.

It localises to the cell inner membrane. In terms of biological role, channel that opens in response to stretch forces in the membrane lipid bilayer. May participate in the regulation of osmotic pressure changes within the cell. The polypeptide is Large-conductance mechanosensitive channel 3 (Mesorhizobium japonicum (strain LMG 29417 / CECT 9101 / MAFF 303099) (Mesorhizobium loti (strain MAFF 303099))).